A 161-amino-acid polypeptide reads, in one-letter code: DNA endonuclease I-CvuI (161 aa).

This sequence belongs to the LAGLIDADG endonuclease family.

The protein resides in the plastid. The protein localises to the chloroplast. Functionally, probable endonuclease involved in intron homing. This is DNA endonuclease I-CvuI from Chlorella vulgaris (Green alga).